A 217-amino-acid polypeptide reads, in one-letter code: UPF0319 protein HSM_0266 (217 aa).

An N-terminal signal peptide occupies residues 1–21 (MKFSFAALASAMLLTSTAAFA).

The protein belongs to the UPF0319 family.

This is UPF0319 protein HSM_0266 from Histophilus somni (strain 2336) (Haemophilus somnus).